A 275-amino-acid polypeptide reads, in one-letter code: 6-deoxy-6-sulfo-D-fructose transketolase subunit SqwG (275 aa).

Belongs to the transketolase family. In terms of assembly, forms a complex with SqwH. It depends on thiamine diphosphate as a cofactor.

The enzyme catalyses 6-deoxy-6-sulfo-D-fructose + D-glyceraldehyde 3-phosphate = 4-deoxy-4-sulfo-D-erythrose + D-xylulose 5-phosphate. It catalyses the reaction 4-deoxy-4-sulfo-D-erythrulose + D-glyceraldehyde 3-phosphate = sulfoacetaldehyde + D-xylulose 5-phosphate. In terms of biological role, part of the sulfo-TK pathway, a D-sulfoquinovose degradation pathway that produces 2-hydroxyethane-1-sulfonate (isethionate). Catalyzes two steps of the pathway: the formation of 4-deoxy-4-sulfoerythrose (SE) and xylulose 5-phosphate from 6-deoxy-6-sulfo-D-fructose (SF) and glyceraldehyde 3-phosphate, and the formation of sulfoacetaldehyde (SA) and xylulose 5-phosphate from 4-deoxy-4-sulfo-D-erythrulose (SEu) and glyceraldehyde 3-phosphate. This is 6-deoxy-6-sulfo-D-fructose transketolase subunit SqwG from Clostridium sp. (strain MSTE9).